The sequence spans 315 residues: Coproporphyrin III ferrochelatase (315 aa).

Fe-coproporphyrin III is bound by residues tyrosine 13, arginine 30, 46–47, serine 54, and tyrosine 125; that span reads RY. Histidine 183 and glutamate 264 together coordinate Fe(2+).

Belongs to the ferrochelatase family.

It localises to the cytoplasm. The catalysed reaction is Fe-coproporphyrin III + 2 H(+) = coproporphyrin III + Fe(2+). The protein operates within porphyrin-containing compound metabolism; protoheme biosynthesis. Its function is as follows. Involved in coproporphyrin-dependent heme b biosynthesis. Catalyzes the insertion of ferrous iron into coproporphyrin III to form Fe-coproporphyrin III. The chain is Coproporphyrin III ferrochelatase from Anoxybacillus flavithermus (strain DSM 21510 / WK1).